Reading from the N-terminus, the 121-residue chain is Auxin-responsive protein SAUR32 (121 aa).

It belongs to the ARG7 family. Expressed in roots, leaves and stems.

Its subcellular location is the nucleus. It is found in the cytoplasm. Functionally, may play a role in the apical hook development. The sequence is that of Auxin-responsive protein SAUR32 from Arabidopsis thaliana (Mouse-ear cress).